Here is a 302-residue protein sequence, read N- to C-terminus: MRITVLSGSDSPEREVSLVSGRAVQAALETLGHEVTMVDPGPDLPVRLLENPPDFVWIALHGDKGENGKLQGLLDWLGLPYNGSGVTASAIAMDKVVSKRLFVAEGIPTPAYRVAEAVPQVSECQAWLAALGSPVVVKPADGGSTVGVTIAREAGHLPEAVRLALQYSPQVLIEQYIPGQEITVALLDGLVLPAIEIVPQGRDFYDYEAKYAPGGSRHLIPPNLAADVLKASVDAAYRACRAVGSTGLVRADVRVDPEGRPWVLEVNTLPGMTATSLAPEAAQAAGIDFEQLIQRIIDRSLD.

The ATP-grasp domain maps to 99-298; sequence KRLFVAEGIP…FEQLIQRIID (200 aa). An ATP-binding site is contributed by 128-183; the sequence is LAALGSPVVVKPADGGSTVGVTIAREAGHLPEAVRLALQYSPQVLIEQYIPGQEIT. Mg(2+)-binding residues include D252, E265, and N267.

The protein belongs to the D-alanine--D-alanine ligase family. It depends on Mg(2+) as a cofactor. Mn(2+) is required as a cofactor.

The protein localises to the cytoplasm. The catalysed reaction is 2 D-alanine + ATP = D-alanyl-D-alanine + ADP + phosphate + H(+). Its pathway is cell wall biogenesis; peptidoglycan biosynthesis. In terms of biological role, cell wall formation. In Gloeobacter violaceus (strain ATCC 29082 / PCC 7421), this protein is D-alanine--D-alanine ligase.